A 329-amino-acid polypeptide reads, in one-letter code: Glycerol-3-phosphate dehydrogenase [NAD(P)+] (329 aa).

NADPH contacts are provided by Trp-11, Arg-30, and Lys-103. 3 residues coordinate sn-glycerol 3-phosphate: Lys-103, Gly-132, and Ser-134. Ala-136 contributes to the NADPH binding site. Lys-187, Asp-240, Ser-250, Arg-251, and Asn-252 together coordinate sn-glycerol 3-phosphate. Lys-187 functions as the Proton acceptor in the catalytic mechanism. Arg-251 contacts NADPH. The NADPH site is built by Val-275 and Glu-277.

It belongs to the NAD-dependent glycerol-3-phosphate dehydrogenase family.

It is found in the cytoplasm. It catalyses the reaction sn-glycerol 3-phosphate + NAD(+) = dihydroxyacetone phosphate + NADH + H(+). The catalysed reaction is sn-glycerol 3-phosphate + NADP(+) = dihydroxyacetone phosphate + NADPH + H(+). Its pathway is membrane lipid metabolism; glycerophospholipid metabolism. Catalyzes the reduction of the glycolytic intermediate dihydroxyacetone phosphate (DHAP) to sn-glycerol 3-phosphate (G3P), the key precursor for phospholipid synthesis. This Methylobacillus flagellatus (strain ATCC 51484 / DSM 6875 / VKM B-1610 / KT) protein is Glycerol-3-phosphate dehydrogenase [NAD(P)+].